Consider the following 723-residue polypeptide: Beta-xylosidase (723 aa).

The first 19 residues, 1–19 (MKKLWLMGLLLASFFTTVA), serve as a signal peptide directing secretion.

Belongs to the glycosyl hydrolase 3 family.

It localises to the periplasm. In terms of biological role, xylosidase involved in ulvan degradation. Ulvan is the main polysaccharide component of the Ulvales (green seaweed) cell wall. It is composed of disaccharide building blocks comprising 3-sulfated rhamnose (Rha3S) linked to D-glucuronic acid (GlcA), L-iduronic acid (IduA), or D-xylose (Xyl). Beta-xylosidase converts Xyl-Rha3S, a product of alpha-L-rhamnosidase acting on Rha-Xyl-Rha3S oligosaccharides, further to Xyl and Rha3S. The enzyme is able to degrade 4-methylumbelliferyl-beta-D-xylopyranoside (MUX) in vitro. The chain is Beta-xylosidase from Formosa agariphila (strain DSM 15362 / KCTC 12365 / LMG 23005 / KMM 3901 / M-2Alg 35-1).